The sequence spans 382 residues: Na(+)/H(+) antiporter NhaA (382 aa).

Helical transmembrane passes span 11-31 (FSVP…LDPA), 47-67 (FHFV…AVEI), 88-108 (LATL…NAII), 116-136 (GWGI…RLVF), 145-165 (FLLL…AVFY), 170-190 (HPTE…AYIL), 261-283 (IVVD…SSVG), 299-319 (LGIF…PQQV), 327-347 (TGLV…VAFV), and 353-373 (GSAK…IMLG).

It belongs to the NhaA Na(+)/H(+) (TC 2.A.33) antiporter family.

It localises to the cell inner membrane. It carries out the reaction Na(+)(in) + 2 H(+)(out) = Na(+)(out) + 2 H(+)(in). Functionally, na(+)/H(+) antiporter that extrudes sodium in exchange for external protons. This Geobacter sulfurreducens (strain ATCC 51573 / DSM 12127 / PCA) protein is Na(+)/H(+) antiporter NhaA.